A 442-amino-acid chain; its full sequence is Probable alpha-galactosidase B (442 aa).

The N-terminal stretch at 1–19 is a signal peptide; that stretch reads MQRYISLSVSLSLLSGANA. Cystine bridges form between Cys-42/Cys-74 and Cys-124/Cys-154. Asp-152 serves as the catalytic Nucleophile. Asn-159, Asn-173, Asn-179, and Asn-215 each carry an N-linked (GlcNAc...) asparagine glycan. 224 to 228 provides a ligand contact to substrate; that stretch reads EWGQA. Asn-235 is a glycosylation site (N-linked (GlcNAc...) asparagine). The active-site Proton donor is the Asp-246. Asn-285 is a glycosylation site (N-linked (GlcNAc...) asparagine).

The protein belongs to the glycosyl hydrolase 27 family.

It is found in the secreted. The catalysed reaction is Hydrolysis of terminal, non-reducing alpha-D-galactose residues in alpha-D-galactosides, including galactose oligosaccharides, galactomannans and galactolipids.. Hydrolyzes a variety of simple alpha-D-galactoside as well as more complex molecules such as oligosaccharides and polysaccharides. This Aspergillus oryzae (strain ATCC 42149 / RIB 40) (Yellow koji mold) protein is Probable alpha-galactosidase B (aglB).